We begin with the raw amino-acid sequence, 134 residues long: uncharacterized protein (134 aa).

The next 3 membrane-spanning stretches (helical) occupy residues Phe-5–Phe-25, Leu-30–Ile-50, and Leu-62–Leu-82.

This sequence belongs to the bacteriophage holin family. Cp-1 holin subfamily.

It localises to the cell membrane. This is an uncharacterized protein from Bacillus subtilis (strain 168).